Here is a 302-residue protein sequence, read N- to C-terminus: Probable protein S-acyltransferase 13 (302 aa).

2 consecutive transmembrane segments (helical) span residues 17-37 (SIMILIVIGIIGFTYYAVVVV) and 56-76 (VLAFFHFLLIMLLWSYFSVVV). One can recognise a DHHC domain in the interval 116–166 (RYCRKCNQYKPPRSHHCSVCGRCILKMDHHCVWVVNCVGANNYKSFLLFLF). Cys146 acts as the S-palmitoyl cysteine intermediate in catalysis. The next 2 helical transmembrane spans lie at 166–186 (FYTFLETTVVAVSLLPIFLVF) and 204–224 (SFVAFVLNIAFALSVLGFLIM).

The protein belongs to the DHHC palmitoyltransferase family.

The protein localises to the cell membrane. It localises to the cytoplasmic vesicle membrane. It carries out the reaction L-cysteinyl-[protein] + hexadecanoyl-CoA = S-hexadecanoyl-L-cysteinyl-[protein] + CoA. Palmitoyl acyltransferase. In Arabidopsis thaliana (Mouse-ear cress), this protein is Probable protein S-acyltransferase 13 (PAT13).